A 352-amino-acid chain; its full sequence is Protein SIS1 (352 aa).

The region spanning 4 to 70 (ETKLYDLLGV…REIYDQYGLE (67 aa)) is the J domain. A Phosphoserine modification is found at S275. Residues 300-325 (VQPVQPSQTSTYPGQGMPTPKNPSQR) are disordered. Residues 301-312 (QPVQPSQTSTYP) show a composition bias toward polar residues.

As to quaternary structure, interacts with polyadenylate-binding protein PAB1.

Its subcellular location is the cytoplasm. The protein localises to the nucleus. In terms of biological role, required for nuclear migration during mitosis. It is required for the normal initiation of translation. Might mediate the dissociation of a specific protein complex of the translation machinery. Essential for viability. The chain is Protein SIS1 (SIS1) from Saccharomyces cerevisiae (strain ATCC 204508 / S288c) (Baker's yeast).